The sequence spans 242 residues: tRNA pseudouridine synthase A (242 aa).

Aspartate 51 serves as the catalytic Nucleophile. Position 107 (tyrosine 107) interacts with substrate.

This sequence belongs to the tRNA pseudouridine synthase TruA family. Homodimer.

The enzyme catalyses uridine(38/39/40) in tRNA = pseudouridine(38/39/40) in tRNA. Functionally, formation of pseudouridine at positions 38, 39 and 40 in the anticodon stem and loop of transfer RNAs. In Helicobacter pylori (strain J99 / ATCC 700824) (Campylobacter pylori J99), this protein is tRNA pseudouridine synthase A.